Reading from the N-terminus, the 114-residue chain is Adapter SH3BGRL (114 aa).

Positions 13 to 50 (STAIKKKQQDVLGFLEANKIGFEEKDIAANEENRKWMR) are required for interaction with HER2. A required for interaction with PFN1, HER2, and ATG12 region spans residues 54-71 (PENSRPATGYPLPPQIFN). Positions 61 to 67 (TGYPLPP) match the SH3-binding motif.

Belongs to the SH3BGR family. As to quaternary structure, monomer. Interacts with PFN1/Profilin-1. Interacts with ERBB2. Interacts with ATG12. Interacts with BECN1. Interacts with translating ribosomes. Ubiquitous.

Its subcellular location is the cytoplasm. The protein localises to the cytosol. The protein resides in the cell membrane. Its function is as follows. Appears to function as an adapter protein that bridges proteins together or proteins with mRNAs. May function as a ubiquitin ligase-substrate adapter. Additionally, associates with translating cytoplasmic ribosomes and may promote the expression of specific mRNAs. In Homo sapiens (Human), this protein is Adapter SH3BGRL.